Here is a 311-residue protein sequence, read N- to C-terminus: 4-hydroxy-3-methylbut-2-enyl diphosphate reductase (311 aa).

Cysteine 12 contributes to the [4Fe-4S] cluster binding site. Residues histidine 41 and histidine 74 each contribute to the (2E)-4-hydroxy-3-methylbut-2-enyl diphosphate site. Dimethylallyl diphosphate-binding residues include histidine 41 and histidine 74. Residues histidine 41 and histidine 74 each coordinate isopentenyl diphosphate. Cysteine 96 provides a ligand contact to [4Fe-4S] cluster. Histidine 124 serves as a coordination point for (2E)-4-hydroxy-3-methylbut-2-enyl diphosphate. Position 124 (histidine 124) interacts with dimethylallyl diphosphate. Histidine 124 is an isopentenyl diphosphate binding site. Glutamate 126 acts as the Proton donor in catalysis. Threonine 168 lines the (2E)-4-hydroxy-3-methylbut-2-enyl diphosphate pocket. Residue cysteine 198 participates in [4Fe-4S] cluster binding. Residues serine 226, serine 227, asparagine 228, and serine 270 each contribute to the (2E)-4-hydroxy-3-methylbut-2-enyl diphosphate site. Residues serine 226, serine 227, asparagine 228, and serine 270 each contribute to the dimethylallyl diphosphate site. The isopentenyl diphosphate site is built by serine 226, serine 227, asparagine 228, and serine 270.

The protein belongs to the IspH family. [4Fe-4S] cluster is required as a cofactor.

It carries out the reaction isopentenyl diphosphate + 2 oxidized [2Fe-2S]-[ferredoxin] + H2O = (2E)-4-hydroxy-3-methylbut-2-enyl diphosphate + 2 reduced [2Fe-2S]-[ferredoxin] + 2 H(+). It catalyses the reaction dimethylallyl diphosphate + 2 oxidized [2Fe-2S]-[ferredoxin] + H2O = (2E)-4-hydroxy-3-methylbut-2-enyl diphosphate + 2 reduced [2Fe-2S]-[ferredoxin] + 2 H(+). It functions in the pathway isoprenoid biosynthesis; dimethylallyl diphosphate biosynthesis; dimethylallyl diphosphate from (2E)-4-hydroxy-3-methylbutenyl diphosphate: step 1/1. Its pathway is isoprenoid biosynthesis; isopentenyl diphosphate biosynthesis via DXP pathway; isopentenyl diphosphate from 1-deoxy-D-xylulose 5-phosphate: step 6/6. Catalyzes the conversion of 1-hydroxy-2-methyl-2-(E)-butenyl 4-diphosphate (HMBPP) into a mixture of isopentenyl diphosphate (IPP) and dimethylallyl diphosphate (DMAPP). Acts in the terminal step of the DOXP/MEP pathway for isoprenoid precursor biosynthesis. The protein is 4-hydroxy-3-methylbut-2-enyl diphosphate reductase of Alcanivorax borkumensis (strain ATCC 700651 / DSM 11573 / NCIMB 13689 / SK2).